Here is a 128-residue protein sequence, read N- to C-terminus: Modulator protein MzrA (128 aa).

The Cytoplasmic portion of the chain corresponds to 1–11; it reads MMVMKRPSLRQ. The chain crosses the membrane as a helical span at residues 12 to 32; the sequence is FSWLLGGSLLLGALFWLWLAV. Residues 33 to 128 are Periplasmic-facing; it reads QQQEATLAIR…RLRDAPHRLG (96 aa).

It belongs to the MzrA family. Interacts with EnvZ.

The protein localises to the cell inner membrane. In terms of biological role, modulates the activity of the EnvZ/OmpR two-component regulatory system, probably by directly modulating EnvZ enzymatic activity and increasing stability of phosphorylated OmpR. This chain is Modulator protein MzrA, found in Klebsiella pneumoniae subsp. pneumoniae (strain ATCC 700721 / MGH 78578).